Here is a 904-residue protein sequence, read N- to C-terminus: Nitrate reductase [NADH] 2 (904 aa).

Polar residues-rich tracts occupy residues 1–10 (MAASVENRQF) and 35–50 (PSPNSTNFQKKPNSTI). The tract at residues 1–65 (MAASVENRQF…SSEDDDDDDE (65 aa)) is disordered. The span at 56–65 (SSEDDDDDDE) shows a compositional bias: acidic residues. Cysteine 183 serves as a coordination point for Mo-molybdopterin. A Cytochrome b5 heme-binding domain is found at 531–606 (SKMYSMSEVR…LEDFRIGELI (76 aa)). Residues histidine 566 and histidine 589 each coordinate heme. In terms of domain architecture, FAD-binding FR-type spans 647–759 (REKIPCKLID…KGPLGHIEYQ (113 aa)). FAD is bound by residues 699-702 (RAYT), 716-720 (VVKIY), phenylalanine 721, phenylalanine 728, 733-735 (QMS), and threonine 786.

It belongs to the nitrate reductase family. Homodimer. FAD is required as a cofactor. Heme serves as cofactor. Requires Mo-molybdopterin as cofactor.

It catalyses the reaction nitrite + NAD(+) + H2O = nitrate + NADH + H(+). With respect to regulation, regulated by the nitrogen source and controlled by the circadian rhythm. Functionally, nitrate reductase is a key enzyme involved in the first step of nitrate assimilation in plants, fungi and bacteria. This is Nitrate reductase [NADH] 2 (NIA2) from Nicotiana tabacum (Common tobacco).